We begin with the raw amino-acid sequence, 473 residues long: MVKIGLEVHVHLTSLKTKLFCSCPSDYTGKDPNTNVCPICLGLPGAIPVLNENAVKAAIMVALAINAEIANSLIMVRKHYFYPDMAKNYQISQYDGPGSIAISKGGYLKLREGKTVRIRRINIEEDPAKIIYPTGSMLTSKYTLLDYNRSGMGLLEIVTEPDMTEPKEAREFLEKLRSILEHLGVCNCDLEGAMRADANVSVEGGERVEIKNIGSPREVEEALKYEIARQKAAIAQGLPVKRETRHWDSERKVTVPTRTKETEEDYRYFPDPDLPPYPITQDLIEEIRKTLPELPDLRIKRLVTQYGISDYDATVLVMDKALADLFEETAKHYSNYKKLVNLLINDYLRWLNDKNLRPSQSKAGSQHLVELLKLLDDGVITIKIAKEILPEIVLEGKMPSSIIKERGLVAIKDEDYLINVIKEVINEEPDAAEKAKNDPKVINYLVGKVMKKTGKRADPQLTNELIKKILGIK.

This sequence belongs to the GatB/GatE family. GatB subfamily. As to quaternary structure, heterotrimer of A, B and C subunits.

The enzyme catalyses L-glutamyl-tRNA(Gln) + L-glutamine + ATP + H2O = L-glutaminyl-tRNA(Gln) + L-glutamate + ADP + phosphate + H(+). The catalysed reaction is L-aspartyl-tRNA(Asn) + L-glutamine + ATP + H2O = L-asparaginyl-tRNA(Asn) + L-glutamate + ADP + phosphate + 2 H(+). In terms of biological role, allows the formation of correctly charged Asn-tRNA(Asn) or Gln-tRNA(Gln) through the transamidation of misacylated Asp-tRNA(Asn) or Glu-tRNA(Gln) in organisms which lack either or both of asparaginyl-tRNA or glutaminyl-tRNA synthetases. The reaction takes place in the presence of glutamine and ATP through an activated phospho-Asp-tRNA(Asn) or phospho-Glu-tRNA(Gln). The chain is Aspartyl/glutamyl-tRNA(Asn/Gln) amidotransferase subunit B from Sulfurisphaera tokodaii (strain DSM 16993 / JCM 10545 / NBRC 100140 / 7) (Sulfolobus tokodaii).